Here is a 338-residue protein sequence, read N- to C-terminus: Glyceraldehyde-3-phosphate dehydrogenase (338 aa).

NAD(+)-binding positions include 13 to 14 (RI), Asp-35, and Arg-80. D-glyceraldehyde 3-phosphate contacts are provided by residues 151–153 (SCT), Thr-182, 211–212 (TG), and Arg-234. Cys-152 (nucleophile) is an active-site residue. Asn-316 contacts NAD(+).

Belongs to the glyceraldehyde-3-phosphate dehydrogenase family. In terms of assembly, homotetramer.

It localises to the cytoplasm. It catalyses the reaction D-glyceraldehyde 3-phosphate + phosphate + NAD(+) = (2R)-3-phospho-glyceroyl phosphate + NADH + H(+). It functions in the pathway carbohydrate degradation; glycolysis; pyruvate from D-glyceraldehyde 3-phosphate: step 1/5. In Sclerotinia sclerotiorum (White mold), this protein is Glyceraldehyde-3-phosphate dehydrogenase (GPD).